Reading from the N-terminus, the 200-residue chain is Large ribosomal subunit protein uL4 (200 aa).

The segment at 44 to 71 (AQKTRAEVSGGGKKPWRQKGTGRARAGS) is disordered.

It belongs to the universal ribosomal protein uL4 family. Part of the 50S ribosomal subunit.

Functionally, one of the primary rRNA binding proteins, this protein initially binds near the 5'-end of the 23S rRNA. It is important during the early stages of 50S assembly. It makes multiple contacts with different domains of the 23S rRNA in the assembled 50S subunit and ribosome. In terms of biological role, forms part of the polypeptide exit tunnel. The sequence is that of Large ribosomal subunit protein uL4 from Psychrobacter sp. (strain PRwf-1).